The sequence spans 624 residues: Actin-related protein 8 (624 aa).

M1 carries the N-acetylmethionine modification. A compositionally biased stretch (basic and acidic residues) spans 1-25; the sequence is MTQAEKGDAENGKEKGGEKEKEQRG. Residues 1–29 are disordered; it reads MTQAEKGDAENGKEKGGEKEKEQRGVKRP. S55 and T56 together coordinate ATP. S132 is subject to Phosphoserine. 283-286 contacts ATP; that stretch reads DVGD. S412 carries the post-translational modification Phosphoserine. The tract at residues 430 to 460 is disordered; the sequence is SKQEQSAKATADRKSASKPIGFEGDLRGQSS.

Belongs to the actin family. ARP8 subfamily. Component of the chromatin remodeling INO80 complex; specifically part of a complex module associated with the DBINO domain of INO80. Exists as monomers and dimers, but the dimer is most probably the biologically relevant form required for stable interactions with histones that exploits the twofold symmetry of the nucleosome core.

It is found in the nucleus. The protein localises to the chromosome. Its function is as follows. Plays an important role in the functional organization of mitotic chromosomes. Exhibits low basal ATPase activity, and unable to polymerize. Functionally, proposed core component of the chromatin remodeling INO80 complex which is involved in transcriptional regulation, DNA replication and probably DNA repair. Required for the recruitment of INO80 (and probably the INO80 complex) to sites of DNA damage Strongly prefer nucleosomes and H3-H4 tetramers over H2A-H2B dimers, suggesting it may act as a nucleosome recognition module within the complex. The polypeptide is Actin-related protein 8 (ACTR8) (Ailuropoda melanoleuca (Giant panda)).